The sequence spans 147 residues: Interleukin-4 (147 aa).

The first 24 residues, 1–24 (MGLSPHLAVTLFCFLICTGNGIHG), serve as a signal peptide directing secretion. C47 and C87 are disulfide-bonded. 3 N-linked (GlcNAc...) asparagine glycosylation sites follow: N61, N90, and N117.

This sequence belongs to the IL-4/IL-13 family.

It localises to the secreted. In terms of biological role, participates in at least several B-cell activation processes as well as of other cell types. It is a costimulator of DNA-synthesis. It induces the expression of class II MHC molecules on resting B-cells. It enhances both secretion and cell surface expression of IgE and IgG1. It also regulates the expression of the low affinity Fc receptor for IgE (CD23) on both lymphocytes and monocytes. Positively regulates IL31RA expression in macrophages. Stimulates autophagy in dendritic cells by interfering with mTORC1 signaling and through the induction of RUFY4. The sequence is that of Interleukin-4 (Il4) from Rattus norvegicus (Rat).